The chain runs to 419 residues: Endochitinase 2 (419 aa).

The signal sequence occupies residues 1–18; it reads MHHLRALVGVGLAGLAAG. The GH18 domain occupies 35-343; that stretch reads AQNVVYWGQN…QQAKSILVNG (309 aa). Residue N153 is glycosylated (N-linked (GlcNAc...) asparagine). E173 (proton donor) is an active-site residue. N-linked (GlcNAc...) asparagine glycans are attached at residues N237 and N256. The disordered stretch occupies residues 343-390; the sequence is GAPCPSSGPPSSTPATAPAPTATTMPSSTSVSSPTASPTGGTVPQWGQ. The segment covering 355–384 has biased composition (low complexity); the sequence is TPATAPAPTATTMPSSTSVSSPTASPTGGT. In terms of domain architecture, CBM1 spans 383–419; that stretch reads GTVPQWGQCGGEGYSGPTQCVPPYQCVKQGDWWSSCR.

The protein belongs to the glycosyl hydrolase 18 family. Chitinase class III subfamily.

The protein resides in the secreted. It catalyses the reaction Random endo-hydrolysis of N-acetyl-beta-D-glucosaminide (1-&gt;4)-beta-linkages in chitin and chitodextrins.. Its function is as follows. Secreted chitinase involved in the degradation of chitin, a component of the cell walls of fungi and exoskeletal elements of some animals (including worms and arthropods). Participates in the infection process and directly acts in the penetration process of the host cuticle. This Metarhizium anisopliae (Entomophthora anisopliae) protein is Endochitinase 2 (chi2).